A 118-amino-acid chain; its full sequence is UPF0344 protein Aflv_2205 (118 aa).

4 helical membrane-spanning segments follow: residues 4–24, 32–52, 60–80, and 96–116; these read AHITTWVVALILFVVAIALQA, MLHMLLRLFYILIIATGAWIL, FLYIVKVIVGLWVIGTMEMIL, and FIVAFVVVLYLGFKLPFGFSF.

This sequence belongs to the UPF0344 family.

Its subcellular location is the cell membrane. In Anoxybacillus flavithermus (strain DSM 21510 / WK1), this protein is UPF0344 protein Aflv_2205.